A 239-amino-acid chain; its full sequence is Ribonuclease Le2 (239 aa).

Cystine bridges form between Cys5-Cys22, Cys13-Cys58, Cys21-Cys126, Cys66-Cys118, and Cys191-Cys225. Catalysis depends on residues His51, Glu111, and His115.

The protein belongs to the RNase T2 family.

It catalyses the reaction a ribonucleotidyl-ribonucleotide-RNA + H2O = a 3'-end 3'-phospho-ribonucleotide-RNA + a 5'-end dephospho-ribonucleoside-RNA + H(+). This is a base non-specific and adenylic acid preferential ribonuclease. The sequence is that of Ribonuclease Le2 from Lentinula edodes (Shiitake mushroom).